The primary structure comprises 426 residues: Serine--tRNA ligase (426 aa).

L-serine is bound at residue 233-235 (TSE). Residue 264 to 266 (RSE) participates in ATP binding. Position 287 (Glu287) interacts with L-serine. ATP is bound at residue 351-354 (EISS). Ser387 contacts L-serine.

The protein belongs to the class-II aminoacyl-tRNA synthetase family. Type-1 seryl-tRNA synthetase subfamily. Homodimer. The tRNA molecule binds across the dimer.

The protein resides in the cytoplasm. The enzyme catalyses tRNA(Ser) + L-serine + ATP = L-seryl-tRNA(Ser) + AMP + diphosphate + H(+). The catalysed reaction is tRNA(Sec) + L-serine + ATP = L-seryl-tRNA(Sec) + AMP + diphosphate + H(+). Its pathway is aminoacyl-tRNA biosynthesis; selenocysteinyl-tRNA(Sec) biosynthesis; L-seryl-tRNA(Sec) from L-serine and tRNA(Sec): step 1/1. Its function is as follows. Catalyzes the attachment of serine to tRNA(Ser). Is also able to aminoacylate tRNA(Sec) with serine, to form the misacylated tRNA L-seryl-tRNA(Sec), which will be further converted into selenocysteinyl-tRNA(Sec). The chain is Serine--tRNA ligase from Xylella fastidiosa (strain 9a5c).